Reading from the N-terminus, the 500-residue chain is MTIFDNYEVWFVIGSQHLYGPETLRQVTQHAEHVVNALNTEAKLPCKLVLKPLGTTPDEITAICRDANYDDRCAGLVVWLHTFSPAKMWINGLTMLNKPLLQFHTQFNAALPWDSIDMDFMNLNQTAHGGREFGFIGARMRQQHAVVTGHWQDKQAHERIGSWMRQAVSKQDTRHLKVCRFGDNMREVAVTDGDKVAAQIKFGFSVNTWAVGDLVQVVNSISDGDVNALVDEYESCYTMTPATQIHGEKRQNVLEAARIELGMKRFLEQGGFHAFTTTFEDLHGLKQLPGLAVQRLMQQGYGFAGEGDWKTAALLRIMKVMSTGLQGGTSFMEDYTYHFEKGNDLVLGSHMLEVCPSIAVEEKPILDVQHLGIGGKDDPARLIFNTQTGPAIVASLIDLGDRYRLLVNCIDTVKTPHSLPKLPVANALWKAQPDLPTASEAWILAGGAHHTVFSHALNLNDMCQFAEMHDIEITVIDNDTRLPAFKDALRWNEVYYGFRR.

Residues Glu-306, Glu-333, His-350, and His-450 each coordinate Mn(2+).

This sequence belongs to the arabinose isomerase family. As to quaternary structure, homohexamer. The cofactor is Mn(2+).

It catalyses the reaction beta-L-arabinopyranose = L-ribulose. The protein operates within carbohydrate degradation; L-arabinose degradation via L-ribulose; D-xylulose 5-phosphate from L-arabinose (bacterial route): step 1/3. Functionally, catalyzes the conversion of L-arabinose to L-ribulose. This chain is L-arabinose isomerase, found in Escherichia coli (strain 55989 / EAEC).